Here is a 297-residue protein sequence, read N- to C-terminus: Succinate dehydrogenase [ubiquinone] iron-sulfur subunit, mitochondrial (297 aa).

Positions 33–55 (TAEALSASRPPIKETKTSTVKEP) are disordered. Residues 78–157 (DKPRMQSYTL…ETRIYPLPHT (80 aa)) form the 2Fe-2S ferredoxin-type domain. [2Fe-2S] cluster contacts are provided by Cys-117, Cys-122, Cys-125, and Cys-137. The 4Fe-4S ferredoxin-type domain occupies 199–229 (DRKKLDGLYECILCACCSTSCPSYWWNSEEY). The [4Fe-4S] cluster site is built by Cys-209, Cys-212, and Cys-215. Cys-219 lines the [3Fe-4S] cluster pocket. Trp-224 contacts a ubiquinone. [3Fe-4S] cluster contacts are provided by Cys-266 and Cys-272. Residue Cys-276 participates in [4Fe-4S] cluster binding.

This sequence belongs to the succinate dehydrogenase/fumarate reductase iron-sulfur protein family. Component of complex II composed of four subunits: a flavoprotein (FP), an iron-sulfur protein (IP), and a cytochrome b composed of a large and a small subunit. [2Fe-2S] cluster is required as a cofactor. Requires [3Fe-4S] cluster as cofactor. It depends on [4Fe-4S] cluster as a cofactor.

It is found in the mitochondrion inner membrane. The catalysed reaction is a quinone + succinate = fumarate + a quinol. It functions in the pathway carbohydrate metabolism; tricarboxylic acid cycle; fumarate from succinate (eukaryal route): step 1/1. Its function is as follows. Iron-sulfur protein (IP) subunit of succinate dehydrogenase (SDH) that is involved in complex II of the mitochondrial electron transport chain and is responsible for transferring electrons from succinate to ubiquinone (coenzyme Q). The sequence is that of Succinate dehydrogenase [ubiquinone] iron-sulfur subunit, mitochondrial (SDH2) from Zymoseptoria tritici (Speckled leaf blotch fungus).